The sequence spans 196 residues: Endoribonuclease YbeY (196 aa).

Positions 120, 124, and 130 each coordinate Zn(2+).

Belongs to the endoribonuclease YbeY family. The cofactor is Zn(2+).

Its subcellular location is the cytoplasm. Functionally, single strand-specific metallo-endoribonuclease involved in late-stage 70S ribosome quality control and in maturation of the 3' terminus of the 16S rRNA. The chain is Endoribonuclease YbeY from Corynebacterium diphtheriae (strain ATCC 700971 / NCTC 13129 / Biotype gravis).